Reading from the N-terminus, the 414-residue chain is Putative dipeptidase ARB_02715 (414 aa).

The N-terminal stretch at 1–20 is a signal peptide; the sequence is MAALFVSLLALTSLVPVQGA. Residues histidine 45, aspartate 47, and glutamate 157 each coordinate Zn(2+). Cysteine 96 and cysteine 186 are oxidised to a cystine. Histidine 184 is a substrate binding site. Zn(2+) is bound by residues histidine 228 and histidine 249. The substrate site is built by arginine 260 and aspartate 320. Asparagine 392 carries an N-linked (GlcNAc...) asparagine glycan.

The protein belongs to the metallo-dependent hydrolases superfamily. Peptidase M19 family. Requires Zn(2+) as cofactor.

It carries out the reaction an L-aminoacyl-L-amino acid + H2O = 2 an L-alpha-amino acid. In terms of biological role, hydrolyzes a wide range of dipeptides. In Arthroderma benhamiae (strain ATCC MYA-4681 / CBS 112371) (Trichophyton mentagrophytes), this protein is Putative dipeptidase ARB_02715.